The primary structure comprises 484 residues: MATCSRQFTSSSSMKGSCGIGGGSSRMSSILAGGSCRAPSTYGGMSVTSSRFSSGGACGIGGGYGGSFSSSSFGGGLGSGFGGRFDGFGGGFGGGLGGGFGGGLGGGLGGGIGDGLLVGSEKVTMQNLNDRLATYLDKVRALEEANTELEVKIRDWYQRQRPTEIKDYSPYFKTIEDLKSKILAATVDNANVLLQIDNARLAADDFRTKFETEQSLRMSVEADINGLRRVLDELTLARADLEMQIESLKEELAYLKKNHEEEMASMRGQVGGDVNVEMDAAPGVDLSRILNEMRDQYEKMAEKNRKDAEEWFFSKTEELNREVATNSELVQSGKSEISELRRTMQNLEIELQSQLSMKASLENNLEETKGRYCMQLAQIQEMIGSVEEQLAQLRCEMEQQNQEYKILLDVKTRLEQEIATYRRLLEGEDAHLSSSQFSSSSQFSSGSQSSRDVTSTNRQIRTKVMDVHDGKVVSTHEQVLRTKN.

Residues 1–20 (MATCSRQFTSSSSMKGSCGI) form a disordered region. The segment at 1 to 120 (MATCSRQFTS…GIGDGLLVGS (120 aa)) is head. The segment at 121-156 (EKVTMQNLNDRLATYLDKVRALEEANTELEVKIRDW) is coil 1A. The IF rod domain occupies 121–432 (EKVTMQNLND…RLLEGEDAHL (312 aa)). The segment at 157-174 (YQRQRPTEIKDYSPYFKT) is linker 1. The interval 175 to 266 (IEDLKSKILA…KNHEEEMASM (92 aa)) is coil 1B. A linker 12 region spans residues 267-289 (RGQVGGDVNVEMDAAPGVDLSRI). The coil 2 stretch occupies residues 290–428 (LNEMRDQYEK…ATYRRLLEGE (139 aa)). Residues 429–484 (DAHLSSSQFSSSSQFSSGSQSSRDVTSTNRQIRTKVMDVHDGKVVSTHEQVLRTKN) are tail. Residues 431–484 (HLSSSQFSSSSQFSSGSQSSRDVTSTNRQIRTKVMDVHDGKVVSTHEQVLRTKN) form an interaction with Type I keratins and keratin filaments region. The segment covering 435 to 450 (SQFSSSSQFSSGSQSS) has biased composition (low complexity). A disordered region spans residues 435–457 (SQFSSSSQFSSGSQSSRDVTSTN). Position 447 is a phosphoserine (S447).

It belongs to the intermediate filament family. As to quaternary structure, heterotetramer of two type I and two type II keratins. Forms a disulfide-linked heterodimer (via 2B domains) with KRT5 (via 2B domains). Forms a heterodimer with KRT1; the interaction is more abundant in the absence of KRT5. Interacts with PLEC isoform 1C, when in a heterodimer with KRT5. Interacts with TRADD and with keratin filaments. Associates with other type I keratins. Interacts with EPPK1. Interacts with KLHL24. Interacts with PKP1 (via N-terminus) and PKP2. Post-translationally, a disulfide bond is formed between rather than within filaments and promotes the formation of a keratin filament cage around the nucleus. Ubiquitinated by the BCR(KLHL24) E3 ubiquitin ligase complex. As to expression, expressed in the corneal epithelium (at protein level). Expressed in the basal layer of the epidermis and the outer root sheath of hair follicles (at protein level). Expressed in the epithelial basal layer in the tail epidermis. Expressed in the parabasal cell row, basal cell layer, and suprabasal epithelial layer of the tongue.

It is found in the cytoplasm. Its subcellular location is the nucleus. Functionally, the nonhelical tail domain is involved in promoting KRT5-KRT14 filaments to self-organize into large bundles and enhances the mechanical properties involved in resilience of keratin intermediate filaments in vitro. The sequence is that of Keratin, type I cytoskeletal 14 (Krt14) from Mus musculus (Mouse).